The sequence spans 445 residues: Methionine aminopeptidase 2-2 (445 aa).

A disordered region spans residues 1–92; it reads MAAQASEDLK…RVPISQLFPN (92 aa). Residues 18 to 33 show a composition bias toward low complexity; sequence AGDSKAAAATAGQAEA. Positions 34-46 are enriched in acidic residues; it reads GEAEDDSDDDEVD. Over residues 47 to 58 the composition is skewed to low complexity; that stretch reads GNAAPEGAASGA. Positions 59–74 are enriched in basic residues; sequence AKKKKKRKPKKKKKGG. Histidine 198 is a substrate binding site. Residues aspartate 218, aspartate 229, and histidine 298 each contribute to the a divalent metal cation site. Histidine 306 is a substrate binding site. A divalent metal cation contacts are provided by glutamate 331 and glutamate 426.

The protein belongs to the peptidase M24A family. Methionine aminopeptidase eukaryotic type 2 subfamily. Requires Co(2+) as cofactor. The cofactor is Zn(2+). Mn(2+) is required as a cofactor. It depends on Fe(2+) as a cofactor.

Its subcellular location is the cytoplasm. The catalysed reaction is Release of N-terminal amino acids, preferentially methionine, from peptides and arylamides.. Functionally, cotranslationally removes the N-terminal methionine from nascent proteins. The N-terminal methionine is often cleaved when the second residue in the primary sequence is small and uncharged (Met-Ala-, Cys, Gly, Pro, Ser, Thr, or Val). This chain is Methionine aminopeptidase 2-2, found in Aspergillus terreus (strain NIH 2624 / FGSC A1156).